Reading from the N-terminus, the 43-residue chain is Delta/kappa-actitoxin-Avd4a (43 aa).

Intrachain disulfides connect Cys4/Cys39, Cys6/Cys32, and Cys22/Cys40.

The protein belongs to the sea anemone type 3 (BDS) potassium channel toxin family.

Its subcellular location is the secreted. It localises to the nematocyst. Functionally, acts as a gating modifier on both Kv and Nav ion channels, and also acts on blood pressure. Voltage-dependently inhibits voltage-gated potassium channels Kv3 (Kv3.1/KCNC1, Kv3.2/KCNC2 and Kv3.4/KCNC4) and slows inactivation of the voltage-gated sodium channel Nav1.7/SCN9A. Inhibits all Kv3.1, Kv3.2 and Kv3.4 by about 50% when tested at a voltage of +40 mV (45%, 48% and 56%, respectively). May act by binding residues in voltage-sensing domains S3b and S4 of Kv3. On sodium channel, tests have been done on human Nav1.7/SCN9A (expressed in HEK293 cells) (EC(50)=3 nM) and rat SCG neurons that mostly carry Nav1.7 channels (EC(50)=300 nM). This toxin also reduces blood pressure. This is Delta/kappa-actitoxin-Avd4a from Anemonia sulcata (Mediterranean snakelocks sea anemone).